Consider the following 729-residue polypeptide: Phosphoribosylformylglycinamidine synthase subunit PurL (729 aa).

Residue His-42 is part of the active site. Residues Tyr-45 and Lys-84 each coordinate ATP. Residue Glu-86 coordinates Mg(2+). Substrate is bound by residues 87–90 (SHNH) and Arg-109. His-88 (proton acceptor) is an active-site residue. Asp-110 provides a ligand contact to Mg(2+). Position 238 (Gln-238) interacts with substrate. Residue Asp-266 coordinates Mg(2+). 310-312 (ESQ) is a binding site for substrate. ATP contacts are provided by Asp-492 and Gly-529. Asn-530 contacts Mg(2+). Ser-532 serves as a coordination point for substrate.

It belongs to the FGAMS family. Monomer. Part of the FGAM synthase complex composed of 1 PurL, 1 PurQ and 2 PurS subunits.

Its subcellular location is the cytoplasm. It carries out the reaction N(2)-formyl-N(1)-(5-phospho-beta-D-ribosyl)glycinamide + L-glutamine + ATP + H2O = 2-formamido-N(1)-(5-O-phospho-beta-D-ribosyl)acetamidine + L-glutamate + ADP + phosphate + H(+). Its pathway is purine metabolism; IMP biosynthesis via de novo pathway; 5-amino-1-(5-phospho-D-ribosyl)imidazole from N(2)-formyl-N(1)-(5-phospho-D-ribosyl)glycinamide: step 1/2. Part of the phosphoribosylformylglycinamidine synthase complex involved in the purines biosynthetic pathway. Catalyzes the ATP-dependent conversion of formylglycinamide ribonucleotide (FGAR) and glutamine to yield formylglycinamidine ribonucleotide (FGAM) and glutamate. The FGAM synthase complex is composed of three subunits. PurQ produces an ammonia molecule by converting glutamine to glutamate. PurL transfers the ammonia molecule to FGAR to form FGAM in an ATP-dependent manner. PurS interacts with PurQ and PurL and is thought to assist in the transfer of the ammonia molecule from PurQ to PurL. This chain is Phosphoribosylformylglycinamidine synthase subunit PurL, found in Campylobacter concisus (strain 13826).